The chain runs to 163 residues: Nucleotide-binding protein Spro_1084 (163 aa).

Belongs to the YajQ family.

Its function is as follows. Nucleotide-binding protein. This Serratia proteamaculans (strain 568) protein is Nucleotide-binding protein Spro_1084.